Consider the following 102-residue polypeptide: Small ribosomal subunit protein uS10 (102 aa).

Residues 34–58 (VSGPVPLPTKTLEVPSRKSPDGEGT) form a disordered region.

Belongs to the universal ribosomal protein uS10 family. In terms of assembly, part of the 30S ribosomal subunit.

Involved in the binding of tRNA to the ribosomes. This chain is Small ribosomal subunit protein uS10, found in Halobacterium salinarum (strain ATCC 29341 / DSM 671 / R1).